We begin with the raw amino-acid sequence, 402 residues long: MSHRKFSAPRHGSMGFTPKKRSKRHRGKVKAFPKDDPTKPIHLTAFIAFKAGMTHIVREVDKPGSKVNKKEVVEAVTIFEAPPMVIVGIVGYIDTPRGPRQFKTVWAEHLSEDCRGRFYKNWHTSKKKAFQKHAKKWQDEDGRKSIEADLNKMKKYCSKIRVIAHTQMKVMKHREKKAHIMEIQINGGTVAEKVDWAREHLEKQVPVDSVFAQDEMIDCIGVTKGKGFKGVTSRWHTKKLPRKTHKGLRKVACIGAWHPSRVQFTVARAGQKGYHHRTEVNKKIYRLGKSCLTEEGKKNGGTDYDITEKSVNPMGGFPHYGLVNQDFVMIRGCCVGSKKRPITLRKSLIVQTKRFAHEKINLKWIDTSSKFGHGRFQTHAEKRAFMGKLKKDLIAESEAVKT.

Residues 1–35 (MSHRKFSAPRHGSMGFTPKKRSKRHRGKVKAFPKD) are disordered. The segment covering 18 to 31 (PKKRSKRHRGKVKA) has biased composition (basic residues).

This sequence belongs to the universal ribosomal protein uL3 family.

The protein resides in the cytoplasm. Functionally, the L3 protein is a component of the large subunit of cytoplasmic ribosomes. This is Large ribosomal subunit protein uL3 (RPL3) from Toxocara canis (Canine roundworm).